We begin with the raw amino-acid sequence, 280 residues long: Protein IMPACT homolog (280 aa).

Residues 9-109 (DELLALESIY…QAAAERESKL (101 aa)) enclose the RWD domain.

The protein belongs to the IMPACT family. As to quaternary structure, interacts (via N-terminus) with gcn1 (via C-terminus); this interaction reduces the gcn1-gcn20 complex formation and prevents the interaction of gcn1 with gcn2 protein kinase and gcn2 activation in amino acid-starved cells. Interacts (via C-terminus) with act1; this interaction occurs in a gcn1-independent manner. Interacts with rpl39; this interaction occurs in a gcn1-independent manner. Associates (via middle region) with ribosomes; this association occurs in a gcn1-independent manner and persists under amino acid starvation conditions.

The protein resides in the cytoplasm. The protein localises to the nucleus. Its function is as follows. Translational regulator that ensures constant high levels of translation under amino acid starvation. Plays a role as a negative regulator of the gcn2 kinase activity; impairs gcn1-mediated gcn2 activation, and hence gcn2-mediated eIF-2-alpha phosphorylation in amino acid-starved cells and subsequent down-regulation of protein synthesis. In normal conditions, it resides in a actin complex and has no activity. The polypeptide is Protein IMPACT homolog (yih1) (Schizosaccharomyces pombe (strain 972 / ATCC 24843) (Fission yeast)).